The primary structure comprises 228 residues: 5'-methylthioadenosine/S-adenosylhomocysteine nucleosidase (228 aa).

E11 acts as the Proton acceptor in catalysis. Residues G77, I151, and M172–E173 contribute to the substrate site. D196 functions as the Proton donor in the catalytic mechanism.

The protein belongs to the PNP/UDP phosphorylase family. MtnN subfamily.

It catalyses the reaction S-adenosyl-L-homocysteine + H2O = S-(5-deoxy-D-ribos-5-yl)-L-homocysteine + adenine. It carries out the reaction S-methyl-5'-thioadenosine + H2O = 5-(methylsulfanyl)-D-ribose + adenine. The enzyme catalyses 5'-deoxyadenosine + H2O = 5-deoxy-D-ribose + adenine. It functions in the pathway amino-acid biosynthesis; L-methionine biosynthesis via salvage pathway; S-methyl-5-thio-alpha-D-ribose 1-phosphate from S-methyl-5'-thioadenosine (hydrolase route): step 1/2. Its function is as follows. Catalyzes the irreversible cleavage of the glycosidic bond in both 5'-methylthioadenosine (MTA) and S-adenosylhomocysteine (SAH/AdoHcy) to adenine and the corresponding thioribose, 5'-methylthioribose and S-ribosylhomocysteine, respectively. Also cleaves 5'-deoxyadenosine, a toxic by-product of radical S-adenosylmethionine (SAM) enzymes, into 5-deoxyribose and adenine. The chain is 5'-methylthioadenosine/S-adenosylhomocysteine nucleosidase from Staphylococcus carnosus (strain TM300).